Reading from the N-terminus, the 448-residue chain is MSASAVNVNPGRNVVVVGTQWGDEGKGKIVDWLTDHAQGVVRFQGGHNAGHTLIIGGKKTILRLIPSGIMHPGVACYIGNGVVLSPEALFKEIGELEAAGVDVQNRLFISEATTLILPYHIAIDQGREARRGAGKIGTTGRGIGPAYEDKVARRGLRVQDLFEPEIFAERLRENLDYHNFVLTQYLGVAAVDFQQTLDTMLSYADRLRPMVTDVSRRLYDVNAAGSNLLFEGAQGTLLDIDHGTYPFVTSSNCVAGAATAGAGVGPQKLNYILGITKAYCTRVGSGPFPSELYDADNAARQEAIGLELATVGKEFGSVTGRPRRTGWLDAAALRRSIQINGVSGLCMTKLDVLDGLDEVKLCVGYKVDGKNVDLLPRGASEVARCEPVYETFAGWKESTVGIKEWDKLPANARAYLSRVQEVAGIPIDMVSTGPDRDETILLRHPFKV.

GTP contacts are provided by residues 22 to 28 (GDEGKGK) and 50 to 52 (GHT). The active-site Proton acceptor is the Asp-23. Mg(2+) is bound by residues Asp-23 and Gly-50. IMP is bound by residues 23–26 (DEGK), 48–51 (NAGH), Thr-139, Arg-153, Gln-234, Thr-249, and Arg-321. Catalysis depends on His-51, which acts as the Proton donor. Substrate is bound at residue 317-323 (SVTGRPR). GTP is bound by residues Arg-323, 349-351 (KLD), and 431-433 (STG).

Belongs to the adenylosuccinate synthetase family. Homodimer. It depends on Mg(2+) as a cofactor.

It localises to the cytoplasm. It catalyses the reaction IMP + L-aspartate + GTP = N(6)-(1,2-dicarboxyethyl)-AMP + GDP + phosphate + 2 H(+). It participates in purine metabolism; AMP biosynthesis via de novo pathway; AMP from IMP: step 1/2. Its function is as follows. Plays an important role in the de novo pathway of purine nucleotide biosynthesis. Catalyzes the first committed step in the biosynthesis of AMP from IMP. This Paraburkholderia xenovorans (strain LB400) protein is Adenylosuccinate synthetase.